A 349-amino-acid chain; its full sequence is NADH-quinone oxidoreductase subunit H (349 aa).

Helical transmembrane passes span 14-34 (LLVW…GCVA), 85-105 (GLFL…WAVI), 120-140 (LLYI…AGWA), 164-184 (MGFA…VDIV), 196-216 (ILSW…ISGV), 243-263 (GMAF…VAAL), 285-305 (AGGF…FLWF), and 324-344 (VFIP…FSPL).

This sequence belongs to the complex I subunit 1 family. In terms of assembly, NDH-1 is composed of 14 different subunits. Subunits NuoA, H, J, K, L, M, N constitute the membrane sector of the complex.

It localises to the cell inner membrane. The catalysed reaction is a quinone + NADH + 5 H(+)(in) = a quinol + NAD(+) + 4 H(+)(out). Functionally, NDH-1 shuttles electrons from NADH, via FMN and iron-sulfur (Fe-S) centers, to quinones in the respiratory chain. The immediate electron acceptor for the enzyme in this species is believed to be ubiquinone. Couples the redox reaction to proton translocation (for every two electrons transferred, four hydrogen ions are translocated across the cytoplasmic membrane), and thus conserves the redox energy in a proton gradient. This subunit may bind ubiquinone. This is NADH-quinone oxidoreductase subunit H from Chromobacterium violaceum (strain ATCC 12472 / DSM 30191 / JCM 1249 / CCUG 213 / NBRC 12614 / NCIMB 9131 / NCTC 9757 / MK).